Consider the following 906-residue polypeptide: Disintegrin and metalloproteinase domain-containing protein 22 (906 aa).

Residues 1–25 (MQAAVAVSVPFLLLCVLGTCPPARC) form the signal peptide. The propeptide occupies 26–222 (GQAGDASLME…KFILKPRPKR (197 aa)). N-linked (GlcNAc...) asparagine glycosylation is present at Asn175. At 223-736 (SKRQLRRYPR…LSGNGVAGTN (514 aa)) the chain is on the extracellular side. The 200-residue stretch at 239-438 (KYIELMIVND…GGGACLFNKP (200 aa)) folds into the Peptidase M12B domain. 17 disulfide bridges follow: Cys349/Cys433, Cys392/Cys417, Cys394/Cys401, Cys447/Cys477, Cys458/Cys474, Cys460/Cys466, Cys473/Cys494, Cys485/Cys491, Cys490/Cys516, Cys503/Cys523, Cys510/Cys542, Cys535/Cys547, Cys554/Cys605, Cys569/Cys635, Cys583/Cys593, Cys600/Cys663, and Cys657/Cys668. One can recognise a Disintegrin domain in the interval 444–531 (PPECGNGFIE…QCAPNIHKMD (88 aa)). N-linked (GlcNAc...) asparagine glycosylation occurs at Asn519. N-linked (GlcNAc...) asparagine glycosylation is present at Asn634. The N-linked (GlcNAc...) asparagine glycan is linked to Asn675. An EGF-like domain is found at 675–712 (NFSTCLSSKEGTICSGNGVCSNELKCVCNRHWIGSDCN). Cystine bridges form between Cys679–Cys694, Cys688–Cys700, and Cys702–Cys711. The chain crosses the membrane as a helical span at residues 737 to 757 (IIIGIIAGTILVLALILGITA). The Cytoplasmic segment spans residues 758 to 906 (WGYKNYREQR…QSARLWETSI (149 aa)). The tract at residues 785–906 (YSDIPPGVST…QSARLWETSI (122 aa)) is disordered. A compositionally biased stretch (low complexity) spans 793 to 810 (STNSASSSKKRSNGLSHS). A Phosphoserine modification is found at Ser810. Basic and acidic residues predominate over residues 811-829 (WSERIPDTKHISDICENGR). Ser834 is modified (phosphoserine). A compositionally biased stretch (basic residues) spans 842–853 (NKKKIRGKRFRP). A phosphoserine mark is found at Ser857, Ser862, Ser866, and Ser870. A compositionally biased stretch (low complexity) spans 862 to 877 (SPAKSPSSSTGSIASS).

As to quaternary structure, interacts with LGI1. Interacts with DLG4/PSD95. Also binds LGI4. Interacts with KCNA2 and DLG2. Interacts with ADAM11. Interacts (via C-terminus) with YWHAB/14-3-3 beta. Interacts (via C-terminus) with YWHAZ/14-3-3 zeta. In terms of processing, the precursor is cleaved by a furin endopeptidase. As to expression, highly expressed in the brain and in some high-grade but not low-grade gliomas. Detected slightly or not at all in other tissues.

It is found in the cell membrane. The protein resides in the cell projection. The protein localises to the axon. In terms of biological role, probable ligand for integrin in the brain. This is a non catalytic metalloprotease-like protein. Involved in regulation of cell adhesion and spreading and in inhibition of cell proliferation. Neuronal receptor for LGI1. The chain is Disintegrin and metalloproteinase domain-containing protein 22 (ADAM22) from Homo sapiens (Human).